The following is a 221-amino-acid chain: Cytidylate kinase (221 aa).

11 to 19 (GPSGVGKST) serves as a coordination point for ATP.

This sequence belongs to the cytidylate kinase family. Type 1 subfamily.

The protein localises to the cytoplasm. The catalysed reaction is CMP + ATP = CDP + ADP. It catalyses the reaction dCMP + ATP = dCDP + ADP. The sequence is that of Cytidylate kinase from Mycoplasmopsis pulmonis (strain UAB CTIP) (Mycoplasma pulmonis).